The sequence spans 476 residues: Sulfate adenylyltransferase subunit 1 (476 aa).

The 217-residue stretch at 25-241 folds into the tr-type G domain; that stretch reads KSLLRFLTCG…LETVEVQRVV (217 aa). The G1 stretch occupies residues 34–41; it reads GSVDDGKS. GTP is bound at residue 34-41; sequence GSVDDGKS. The interval 92-96 is G2; that stretch reads GITID. Residues 113–116 form a G3 region; the sequence is DTPG. Residues 113–117 and 168–171 each bind GTP; these read DTPGH and NKMD. Residues 168-171 form a G4 region; it reads NKMD. Residues 206-208 are G5; the sequence is SAL.

It belongs to the TRAFAC class translation factor GTPase superfamily. Classic translation factor GTPase family. CysN/NodQ subfamily. As to quaternary structure, heterodimer composed of CysD, the smaller subunit, and CysN.

It carries out the reaction sulfate + ATP + H(+) = adenosine 5'-phosphosulfate + diphosphate. The protein operates within sulfur metabolism; hydrogen sulfide biosynthesis; sulfite from sulfate: step 1/3. Its function is as follows. With CysD forms the ATP sulfurylase (ATPS) that catalyzes the adenylation of sulfate producing adenosine 5'-phosphosulfate (APS) and diphosphate, the first enzymatic step in sulfur assimilation pathway. APS synthesis involves the formation of a high-energy phosphoric-sulfuric acid anhydride bond driven by GTP hydrolysis by CysN coupled to ATP hydrolysis by CysD. In Erwinia tasmaniensis (strain DSM 17950 / CFBP 7177 / CIP 109463 / NCPPB 4357 / Et1/99), this protein is Sulfate adenylyltransferase subunit 1.